The primary structure comprises 351 residues: Protein RecA (351 aa).

67 to 74 (GPESSGKT) contributes to the ATP binding site.

It belongs to the RecA family.

It localises to the cytoplasm. Can catalyze the hydrolysis of ATP in the presence of single-stranded DNA, the ATP-dependent uptake of single-stranded DNA by duplex DNA, and the ATP-dependent hybridization of homologous single-stranded DNAs. It interacts with LexA causing its activation and leading to its autocatalytic cleavage. In Arthrobacter sp. (strain FB24), this protein is Protein RecA.